A 64-amino-acid chain; its full sequence is MANAAKTITVEQTASAIRRHHSQRATLIGLKLNKIGRTAELQDTPEVRGMISKVQHLVRIVDEK.

The protein belongs to the universal ribosomal protein uL30 family. As to quaternary structure, part of the 50S ribosomal subunit.

The protein is Large ribosomal subunit protein uL30 of Rhodopseudomonas palustris (strain BisA53).